A 161-amino-acid polypeptide reads, in one-letter code: MSRTAIYPGTFDPLTNGHLDIVTRAAHMFDSVILAIAASPGKQPLFTLEERVAMAREVTAHLTNVEVHGFSELMAHFAQRQGANILVRGLRAVSDFEYELQLANMNRHLMPTLESVFLMPAEAWSFISSSLVKEVARHGGDVDAFLPEQVARALMTRLRDA.

T10 provides a ligand contact to substrate. ATP-binding positions include 10-11 (TF) and H18. Residues K42, M74, and R88 each coordinate substrate. Residues 89-91 (GLR), E99, and 124-130 (WSFISSS) contribute to the ATP site.

Belongs to the bacterial CoaD family. Homohexamer. It depends on Mg(2+) as a cofactor.

It localises to the cytoplasm. The enzyme catalyses (R)-4'-phosphopantetheine + ATP + H(+) = 3'-dephospho-CoA + diphosphate. It functions in the pathway cofactor biosynthesis; coenzyme A biosynthesis; CoA from (R)-pantothenate: step 4/5. Reversibly transfers an adenylyl group from ATP to 4'-phosphopantetheine, yielding dephospho-CoA (dPCoA) and pyrophosphate. In Edwardsiella ictaluri (strain 93-146), this protein is Phosphopantetheine adenylyltransferase.